Reading from the N-terminus, the 255-residue chain is tRNA-cytidine(32) 2-sulfurtransferase (255 aa).

The PP-loop motif signature appears at 37-42 (SGGKDS). [4Fe-4S] cluster-binding residues include cysteine 112, cysteine 115, and cysteine 202.

Belongs to the TtcA family. In terms of assembly, homodimer. Mg(2+) is required as a cofactor. It depends on [4Fe-4S] cluster as a cofactor.

The protein localises to the cytoplasm. The catalysed reaction is cytidine(32) in tRNA + S-sulfanyl-L-cysteinyl-[cysteine desulfurase] + AH2 + ATP = 2-thiocytidine(32) in tRNA + L-cysteinyl-[cysteine desulfurase] + A + AMP + diphosphate + H(+). It functions in the pathway tRNA modification. Functionally, catalyzes the ATP-dependent 2-thiolation of cytidine in position 32 of tRNA, to form 2-thiocytidine (s(2)C32). The sulfur atoms are provided by the cysteine/cysteine desulfurase (IscS) system. The sequence is that of tRNA-cytidine(32) 2-sulfurtransferase from Citrifermentans bemidjiense (strain ATCC BAA-1014 / DSM 16622 / JCM 12645 / Bem) (Geobacter bemidjiensis).